Consider the following 334-residue polypeptide: Holliday junction branch migration complex subunit RuvB (334 aa).

A large ATPase domain (RuvB-L) region spans residues 4–184 (ADRLISAAVI…FGIVQRLEFY (181 aa)). ATP contacts are provided by residues Ile-23, Arg-24, Gly-65, Lys-68, Thr-69, Thr-70, 131–133 (EDY), Arg-174, Tyr-184, and Arg-221. Thr-69 provides a ligand contact to Mg(2+). The interval 185-255 (PVADLEHIVS…VAMKALDMLN (71 aa)) is small ATPAse domain (RuvB-S). The interval 258–334 (AEGFDFMDRK…YKHFGITREE (77 aa)) is head domain (RuvB-H). The DNA site is built by Arg-294, Arg-313, and Arg-318.

Belongs to the RuvB family. In terms of assembly, homohexamer. Forms an RuvA(8)-RuvB(12)-Holliday junction (HJ) complex. HJ DNA is sandwiched between 2 RuvA tetramers; dsDNA enters through RuvA and exits via RuvB. An RuvB hexamer assembles on each DNA strand where it exits the tetramer. Each RuvB hexamer is contacted by two RuvA subunits (via domain III) on 2 adjacent RuvB subunits; this complex drives branch migration. In the full resolvosome a probable DNA-RuvA(4)-RuvB(12)-RuvC(2) complex forms which resolves the HJ.

Its subcellular location is the cytoplasm. The catalysed reaction is ATP + H2O = ADP + phosphate + H(+). Functionally, the RuvA-RuvB-RuvC complex processes Holliday junction (HJ) DNA during genetic recombination and DNA repair, while the RuvA-RuvB complex plays an important role in the rescue of blocked DNA replication forks via replication fork reversal (RFR). RuvA specifically binds to HJ cruciform DNA, conferring on it an open structure. The RuvB hexamer acts as an ATP-dependent pump, pulling dsDNA into and through the RuvAB complex. RuvB forms 2 homohexamers on either side of HJ DNA bound by 1 or 2 RuvA tetramers; 4 subunits per hexamer contact DNA at a time. Coordinated motions by a converter formed by DNA-disengaged RuvB subunits stimulates ATP hydrolysis and nucleotide exchange. Immobilization of the converter enables RuvB to convert the ATP-contained energy into a lever motion, pulling 2 nucleotides of DNA out of the RuvA tetramer per ATP hydrolyzed, thus driving DNA branch migration. The RuvB motors rotate together with the DNA substrate, which together with the progressing nucleotide cycle form the mechanistic basis for DNA recombination by continuous HJ branch migration. Branch migration allows RuvC to scan DNA until it finds its consensus sequence, where it cleaves and resolves cruciform DNA. The polypeptide is Holliday junction branch migration complex subunit RuvB (Yersinia pestis bv. Antiqua (strain Angola)).